The following is a 103-amino-acid chain: Large ribosomal subunit protein bL21 (103 aa).

This sequence belongs to the bacterial ribosomal protein bL21 family. As to quaternary structure, part of the 50S ribosomal subunit. Contacts protein L20.

In terms of biological role, this protein binds to 23S rRNA in the presence of protein L20. This Shewanella amazonensis (strain ATCC BAA-1098 / SB2B) protein is Large ribosomal subunit protein bL21.